A 67-amino-acid polypeptide reads, in one-letter code: Small, acid-soluble spore protein 2 (67 aa).

The protein belongs to the alpha/beta-type SASP family.

In terms of biological role, SASP are bound to spore DNA. They are double-stranded DNA-binding proteins that cause DNA to change to an a-like conformation. They protect the DNA backbone from chemical and enzymatic cleavage and are thus involved in dormant spore's high resistance to UV light. This chain is Small, acid-soluble spore protein 2 (Su-2), found in Sporosarcina ureae.